Here is a 349-residue protein sequence, read N- to C-terminus: Phosphoribosylformylglycinamidine cyclo-ligase (349 aa).

The protein belongs to the AIR synthase family.

It localises to the cytoplasm. The enzyme catalyses 2-formamido-N(1)-(5-O-phospho-beta-D-ribosyl)acetamidine + ATP = 5-amino-1-(5-phospho-beta-D-ribosyl)imidazole + ADP + phosphate + H(+). The protein operates within purine metabolism; IMP biosynthesis via de novo pathway; 5-amino-1-(5-phospho-D-ribosyl)imidazole from N(2)-formyl-N(1)-(5-phospho-D-ribosyl)glycinamide: step 2/2. In Psychrobacter cryohalolentis (strain ATCC BAA-1226 / DSM 17306 / VKM B-2378 / K5), this protein is Phosphoribosylformylglycinamidine cyclo-ligase.